Here is a 476-residue protein sequence, read N- to C-terminus: Salicylate biosynthesis isochorismate synthase (476 aa).

The disordered stretch occupies residues 181-202 (RRRPSGPTAGAQGDASAQERRQ).

The protein belongs to the isochorismate synthase family.

The catalysed reaction is chorismate = isochorismate. Its pathway is siderophore biosynthesis; salicylate biosynthesis. Functionally, involved in the conversion of chorismate to salicylate. The polypeptide is Salicylate biosynthesis isochorismate synthase (pchA) (Pseudomonas aeruginosa (strain ATCC 15692 / DSM 22644 / CIP 104116 / JCM 14847 / LMG 12228 / 1C / PRS 101 / PAO1)).